Consider the following 71-residue polypeptide: uncharacterized protein (71 aa).

Residues 5–22 (VVMCSGLFCSVFAGAFML) traverse the membrane as a helical segment.

It is found in the membrane. This is an uncharacterized protein from Bacillus subtilis (strain 168).